The chain runs to 338 residues: Aspartate carbamoyltransferase catalytic subunit (338 aa).

Residues Arg-57 and Thr-58 each contribute to the carbamoyl phosphate site. Lys-86 provides a ligand contact to L-aspartate. Residues Arg-107, His-135, and Gln-138 each coordinate carbamoyl phosphate. L-aspartate is bound by residues Arg-172 and Arg-234. Carbamoyl phosphate is bound by residues Leu-274 and Pro-275.

The protein belongs to the aspartate/ornithine carbamoyltransferase superfamily. ATCase family. Heterododecamer (2C3:3R2) of six catalytic PyrB chains organized as two trimers (C3), and six regulatory PyrI chains organized as three dimers (R2).

The catalysed reaction is carbamoyl phosphate + L-aspartate = N-carbamoyl-L-aspartate + phosphate + H(+). Its pathway is pyrimidine metabolism; UMP biosynthesis via de novo pathway; (S)-dihydroorotate from bicarbonate: step 2/3. Functionally, catalyzes the condensation of carbamoyl phosphate and aspartate to form carbamoyl aspartate and inorganic phosphate, the committed step in the de novo pyrimidine nucleotide biosynthesis pathway. The protein is Aspartate carbamoyltransferase catalytic subunit of Cellvibrio japonicus (strain Ueda107) (Pseudomonas fluorescens subsp. cellulosa).